Consider the following 332-residue polypeptide: MGSSGSMVKPISGFLTALIQYPVPVVESRADIDKQIKQIIKTIHSTKAGYPGLELIVFPEYSTQGLNTKKWTTEEFLCTVPGPETDLFAEACKESEVYGVFSIMERNPDGGEPYNTAIIIDPQGEMILKYRKLNPWVPVEPWKAGDLGLPVCDGPGGSKLAVCICHDGMFPEVAREAAYKGANVLIRISGYSTQVSEQWMLTNRSNAWQNLMYTLSVNLAGYDGVFYYFGEGQVCNFDGTTLVQGHRNPWEIVTAEVYPELADQARLGWGLENNIYNLGSRGYVATPGGVKENPYTFVKDLAEGKYKVPWEDEIKVKDGTIYGYPVKKTIHS.

The 246-residue stretch at 14 to 259 (FLTALIQYPV…WEIVTAEVYP (246 aa)) folds into the CN hydrolase domain. The Proton acceptor role is filled by Glu60. Lys132 serves as the catalytic Proton donor. The active-site Nucleophile is the Cys165.

It belongs to the carbon-nitrogen hydrolase superfamily. Aliphatic amidase family.

The enzyme catalyses formamide + H2O = formate + NH4(+). Its function is as follows. Is an aliphatic amidase with a restricted substrate specificity, as it only hydrolyzes formamide. The protein is Formamidase of Bacillus cereus (strain ZK / E33L).